The primary structure comprises 259 residues: Submandibular glandular kallikrein-9 (259 aa).

Positions 1 to 18 (MWFLILFLALSLGQIDAA) are cleaved as a signal peptide. Residues 19 to 24 (PPGQSR) constitute a propeptide, activation peptide. Residues 25–256 (VVGGYNCETN…FTSWIKKVMK (232 aa)) form the Peptidase S1 domain. 5 disulfide bridges follow: cysteine 31/cysteine 171, cysteine 48/cysteine 64, cysteine 150/cysteine 217, cysteine 182/cysteine 196, and cysteine 207/cysteine 232. Histidine 63 (charge relay system) is an active-site residue. Residue asparagine 106 is glycosylated (N-linked (GlcNAc...) asparagine). Aspartate 118 serves as the catalytic Charge relay system. Serine 211 functions as the Charge relay system in the catalytic mechanism.

The protein belongs to the peptidase S1 family. Kallikrein subfamily. As to quaternary structure, heterodimer of a light chain and heavy chain linked by a disulfide bond.

It carries out the reaction Preferential cleavage of Arg-|-Xaa bonds in small molecule substrates. Highly selective action to release kallidin (lysyl-bradykinin) from kininogen involves hydrolysis of Met-|-Xaa or Leu-|-Xaa.. In terms of biological role, glandular kallikreins cleave Met-Lys and Arg-Ser bonds in kininogen to release Lys-bradykinin. This enzyme has a vasoconstrictor activity. KLK-9 has both a chymotrypsin-like and a trypsin-like properties. The protein is Submandibular glandular kallikrein-9 (Klk9) of Rattus norvegicus (Rat).